The sequence spans 418 residues: Serine hydroxymethyltransferase (418 aa).

(6S)-5,6,7,8-tetrahydrofolate-binding positions include L121 and 125-127 (GHL). The residue at position 230 (K230) is an N6-(pyridoxal phosphate)lysine. 355 to 357 (SPF) contacts (6S)-5,6,7,8-tetrahydrofolate.

It belongs to the SHMT family. Homodimer. Requires pyridoxal 5'-phosphate as cofactor.

It is found in the cytoplasm. It carries out the reaction (6R)-5,10-methylene-5,6,7,8-tetrahydrofolate + glycine + H2O = (6S)-5,6,7,8-tetrahydrofolate + L-serine. Its pathway is one-carbon metabolism; tetrahydrofolate interconversion. The protein operates within amino-acid biosynthesis; glycine biosynthesis; glycine from L-serine: step 1/1. In terms of biological role, catalyzes the reversible interconversion of serine and glycine with tetrahydrofolate (THF) serving as the one-carbon carrier. This reaction serves as the major source of one-carbon groups required for the biosynthesis of purines, thymidylate, methionine, and other important biomolecules. Also exhibits THF-independent aldolase activity toward beta-hydroxyamino acids, producing glycine and aldehydes, via a retro-aldol mechanism. This chain is Serine hydroxymethyltransferase, found in Streptococcus pyogenes serotype M6 (strain ATCC BAA-946 / MGAS10394).